The chain runs to 575 residues: Urease subunit alpha (575 aa).

The Urease domain maps to 138 to 575 (GAVDCHVHLI…LPMTQRYFLF (438 aa)). His-143, His-145, and Lys-226 together coordinate Ni(2+). An N6-carboxylysine modification is found at Lys-226. His-228 lines the substrate pocket. Residues His-255 and His-281 each coordinate Ni(2+). Residue His-329 is the Proton donor of the active site. Ni(2+) is bound at residue Asp-369.

Belongs to the metallo-dependent hydrolases superfamily. Urease alpha subunit family. Heterotrimer of UreA (gamma), UreB (beta) and UreC (alpha) subunits. Three heterotrimers associate to form the active enzyme. Ni cation serves as cofactor. Carboxylation allows a single lysine to coordinate two nickel ions.

It is found in the cytoplasm. It catalyses the reaction urea + 2 H2O + H(+) = hydrogencarbonate + 2 NH4(+). Its pathway is nitrogen metabolism; urea degradation; CO(2) and NH(3) from urea (urease route): step 1/1. This is Urease subunit alpha from Frankia casuarinae (strain DSM 45818 / CECT 9043 / HFP020203 / CcI3).